The primary structure comprises 138 residues: Large ribosomal subunit protein uL16 (138 aa).

The protein belongs to the universal ribosomal protein uL16 family. Part of the 50S ribosomal subunit.

In terms of biological role, binds 23S rRNA and is also seen to make contacts with the A and possibly P site tRNAs. The sequence is that of Large ribosomal subunit protein uL16 from Nitrosomonas europaea (strain ATCC 19718 / CIP 103999 / KCTC 2705 / NBRC 14298).